Reading from the N-terminus, the 899-residue chain is Gamma-aminobutyric acid type B receptor subunit 1 (899 aa).

The first 19 residues, 1–19, serve as a signal peptide directing secretion; the sequence is MFVRSSWLLLWGTIVWASA. Over 20-447 the chain is Extracellular; the sequence is EPVTLHIGGT…KKHAMTVSNE (428 aa). N69, N266, N339, N353, and N371 each carry an N-linked (GlcNAc...) asparagine glycan. Residues 448–468 form a helical membrane-spanning segment; it reads FYYPTILFAVLGIAACVFIYL. At 469–487 the chain is on the cytoplasmic side; sequence FTQKHHERLIIFQSQPECN. Residues 488 to 508 form a helical membrane-spanning segment; sequence NILLIGCSLCLFSLFLIGLPS. Residues 509-525 lie on the Extracellular side of the membrane; that stretch reads DDISISESLFPLLCHAR. A helical membrane pass occupies residues 526–546; that stretch reads VTILLFGFTFAYGSMFAKVWI. At 547–616 the chain is on the cytoplasmic side; that stretch reads VHRMGATENQ…LNQPISSSKF (70 aa). The chain crosses the membrane as a helical span at residues 617-637; it reads YVIVAALTAVDVFVCFVWVLI. The Extracellular portion of the chain corresponds to 638–674; that stretch reads DPLHLTEQKFPLFTPADSEEDEMIMPVLQQCQSNQQE. The chain crosses the membrane as a helical span at residues 675-695; sequence VWIGIIMGFKCLLLVFGTFLS. The Cytoplasmic portion of the chain corresponds to 696–713; that stretch reads YETRNLKLRFINDSRFVG. A helical membrane pass occupies residues 714–734; the sequence is LAIYNVAVMTLVTAPVVTLLI. The Extracellular segment spans residues 735–741; it reads HGKVDAN. Residues 742–762 form a helical membrane-spanning segment; sequence FAFISLTVLICTYISVGLIYG. The Cytoplasmic portion of the chain corresponds to 763 to 899; sequence PKIRHIIKVP…SSTSSDEILL (137 aa). Positions 791–842 form a coiled coil; it reads KVDQKRYDMLKKENETLQIQIEEKERKIHECKERLEELTKNSETEDMNAQLL. A disordered region spans residues 870 to 899; sequence DLQNGNHPGQIYENDNDDDGSSTSSDEILL. A compositionally biased stretch (low complexity) spans 890–899; sequence SSTSSDEILL.

Belongs to the G-protein coupled receptor 3 family. May form a heterodimer with gbb-2. Expressed in the nervous system, including cholinergic motor neurons, but not in GABAergic motor neurons or muscle.

The protein localises to the cell membrane. Its function is as follows. Component of a heterodimeric G-protein coupled receptor for GABA, formed by gbb-1 and gbb-2. Within the heterodimeric GABA receptor, only gbb-1 seems to bind agonists, while gbb-2 mediates coupling to G proteins. Ligand binding causes a conformation change that triggers signaling via guanine nucleotide-binding proteins (G proteins) and modulates the activity of down-stream effectors, such as adenylate cyclase. Signaling inhibits adenylate cyclase, stimulates phospholipase A2, activates potassium channels, inactivates voltage-dependent calcium-channels and modulates inositol phospholipid hydrolysis. Calcium is required for high affinity binding to GABA. Plays a critical role in the fine-tuning of inhibitory synaptic transmission. Pre-synaptic GABA receptor inhibits neurotransmitter release by down-regulating high-voltage activated calcium channels, whereas postsynaptic GABA receptor decreases neuronal excitability by activating a prominent inwardly rectifying potassium (Kir) conductance that underlies the late inhibitory postsynaptic potentials. Along with gbb-2, may couple to the G(o)-alpha G-protein goa-1 to negatively regulate cholinergic receptor activity in the presence of high levels of acetylcholine in ventral cord motor neurons. As acetylcholine depolarizes body wall muscles, modulation of acetylcholine levels most likely results in the control of locomotory behavior. Acts in neurons to regulate lifespan, and this may be through G-protein-egl-8/PLC-beta signaling to the transcription factor daf-16/FOXO. In Caenorhabditis elegans, this protein is Gamma-aminobutyric acid type B receptor subunit 1.